A 359-amino-acid chain; its full sequence is Serine hydrolase-like protein DDB_G0286239 (359 aa).

The AB hydrolase-1 domain occupies Leu-38 to Glu-289. Residue Ser-111 is part of the active site. A disordered region spans residues Phe-310–Leu-359. A compositionally biased stretch (polar residues) spans His-334 to Ile-351.

Belongs to the AB hydrolase superfamily.

Probable serine hydrolase. The polypeptide is Serine hydrolase-like protein DDB_G0286239 (Dictyostelium discoideum (Social amoeba)).